A 372-amino-acid chain; its full sequence is Cobalt-precorrin-5B C(1)-methyltransferase (372 aa).

This sequence belongs to the CbiD family.

The catalysed reaction is Co-precorrin-5B + S-adenosyl-L-methionine = Co-precorrin-6A + S-adenosyl-L-homocysteine. It functions in the pathway cofactor biosynthesis; adenosylcobalamin biosynthesis; cob(II)yrinate a,c-diamide from sirohydrochlorin (anaerobic route): step 6/10. Catalyzes the methylation of C-1 in cobalt-precorrin-5B to form cobalt-precorrin-6A. The sequence is that of Cobalt-precorrin-5B C(1)-methyltransferase from Geobacillus thermodenitrificans (strain NG80-2).